The primary structure comprises 652 residues: Spermatogenesis-associated protein 13 (652 aa).

Residues 1–24 (MTSASPEDQNAPVGCPKGARRRRP) are disordered. Serine 78 is modified (phosphoserine). The tract at residues 81–108 (IGLDRVGRRRQMRASNVSSDGGTEPSAL) is disordered. The ABR (APC-binding region) domain stretch occupies residues 98–150 (SSDGGTEPSALVDDNGSEEDFSYEDLCQASPRYLQPGGEQLAINELISDGNVV). The residue at position 114 (serine 114) is a Phosphoserine. The 60-residue stretch at 147 to 206 (GNVVCAEALWDHVTMDDQELGFKAGDVIQVLEASNKDWWWGRSEDKEAWFPASFVRLRVN) folds into the SH3 domain. The disordered stretch occupies residues 209–235 (ELSENSSSTPSEEQDEEASQSRHRHCE). The DH domain occupies 240–424 (MRTNVIREIM…KNVACLINER (185 aa)). The region spanning 455–561 (ELIHSGELTK…WLQACADERR (107 aa)) is the PH domain. The segment at 561-652 (RRVQEDKEMG…TFNRLTPFRK (92 aa)) is C-terminal tail.

As to quaternary structure, interacts (via ABR and SH3 domain) with APC. The binding of APC enhances its GEF activity by relieving it from an autoinhibitory conformation, in which the ABR and SH3 domains are associated with the C-terminal tail. Interacts (via C-terminal tail) with PPP1R9B (via C-terminus). Interacts with RAC1. Expressed at high levels in the placenta, spleen and kidney, at moderate levels in lung, small intestine, liver, brain and heart, and at low levels in skeletal muscle. Expression is aberrantly enhanced in most colorectal tumors.

It is found in the cytoplasm. It localises to the cell projection. Its subcellular location is the filopodium. The protein resides in the lamellipodium. The protein localises to the ruffle membrane. It is found in the podosome. Both the ABR and the SH3 domains contribute to maintaining the protein in an inhibited conformation by associating with the C-terminal tail. Binding of these domains to the C-terminal tail inhibits the activity of the protein by blocking a region that is required for its GEF activity. In terms of biological role, acts as a guanine nucleotide exchange factor (GEF) for RHOA, RAC1 and CDC42 GTPases. Regulates cell migration and adhesion assembly and disassembly through a RAC1, PI3K, RHOA and AKT1-dependent mechanism. Increases both RAC1 and CDC42 activity, but decreases the amount of active RHOA. Required for MMP9 up-regulation via the JNK signaling pathway in colorectal tumor cells. Involved in tumor angiogenesis and may play a role in intestinal adenoma formation and tumor progression. The protein is Spermatogenesis-associated protein 13 of Homo sapiens (Human).